We begin with the raw amino-acid sequence, 544 residues long: Phosphoenolpyruvate carboxykinase (ATP) (544 aa).

246–253 (GLSGTGKT) serves as a coordination point for ATP.

The protein belongs to the phosphoenolpyruvate carboxykinase (ATP) family.

It catalyses the reaction oxaloacetate + ATP = phosphoenolpyruvate + ADP + CO2. Its pathway is carbohydrate biosynthesis; gluconeogenesis. This is Phosphoenolpyruvate carboxykinase (ATP) (PCK1) from Candida glabrata (strain ATCC 2001 / BCRC 20586 / JCM 3761 / NBRC 0622 / NRRL Y-65 / CBS 138) (Yeast).